The following is a 160-amino-acid chain: MSSIKFQNIIENILKKCQDNRHSQDSVVRAVHSVIHQYNKFEALMPDFSLCVHDRIKFTGEAILLTTEHTTNWGKVVAMLSFSAAVLQTIDEEYKCVATSMLSSYISRSVGANWFIENGGEKSLVEFCNSIMPQNPFNVLNFLVPAVLAGLVLMQTLLIK.

The BH1 signature appears at L64–A84.

This sequence belongs to the Bcl-2 family.

The protein is Bcl-2-like gene 16 protein (16) of Saimiri sciureus (Common squirrel monkey).